A 493-amino-acid polypeptide reads, in one-letter code: MTDLTSLTIAEARAKLSDKEITAVELTDAYLAAIEAANETINAYIAVTPDKAREMAKASDARIGAGKAGALEGIPLGIKDLFGTQGLHTQACSHILDGFRPHYESTVTQNLWNDGAVMLGKLNMDEFAMGSSNETSYYGPVKNPWRAKESNLDLVPGGSSGGSAAAVAARLCAGATATDTGGSIRQPAAFTGTVGIKPTYGRCSRWGVIAFASSLDQAGPIARDVRDAAILLKSMASVDPKDTTSVDLPVPDYEAAIGQSIKGMRIGIPKEYRVEGMPEEIEALWQQGVAWLKDAGAEIVDISLPHTKYALPAYYIVAPAEASSNLARYDGVRYGLRVDGKDIVDMYEKTRAAGFGQEVKRRIMIGTYVLSAGYYDAYYLRAQKVRTLIKRDFELAFHAGVDAILTPATPSSAFGIADEDLASDPVKMYLNDIFTVTVNMAGLPGIAVPGGLDHKGLPLGLQLIGKPFDEETLFKTAHVIEQAAGRFTPSKWW.

Residues Lys-79 and Ser-159 each act as charge relay system in the active site. Ser-183 functions as the Acyl-ester intermediate in the catalytic mechanism.

The protein belongs to the amidase family. GatA subfamily. As to quaternary structure, heterotrimer of A, B and C subunits.

The catalysed reaction is L-glutamyl-tRNA(Gln) + L-glutamine + ATP + H2O = L-glutaminyl-tRNA(Gln) + L-glutamate + ADP + phosphate + H(+). Its function is as follows. Allows the formation of correctly charged Gln-tRNA(Gln) through the transamidation of misacylated Glu-tRNA(Gln) in organisms which lack glutaminyl-tRNA synthetase. The reaction takes place in the presence of glutamine and ATP through an activated gamma-phospho-Glu-tRNA(Gln). This is Glutamyl-tRNA(Gln) amidotransferase subunit A from Sinorhizobium medicae (strain WSM419) (Ensifer medicae).